Here is a 38-residue protein sequence, read N- to C-terminus: Kappa-theraphotoxin-Hm2a (38 aa).

Cystine bridges form between C2/C16, C9/C21, and C15/C32. F38 bears the Phenylalanine amide mark.

This sequence belongs to the neurotoxin 10 (Hwtx-1) family. 13 (Hntx-13) subfamily. Expressed by the venom gland.

The protein localises to the secreted. Its function is as follows. Inhibitor of voltage-gated potassium channels. It specifically inhibits Kv2.1/KCNB1 channels. The chain is Kappa-theraphotoxin-Hm2a from Heteroscodra maculata (Togo starburst tarantula).